A 561-amino-acid polypeptide reads, in one-letter code: ATP-dependent rRNA helicase RRP3 (561 aa).

Composition is skewed to low complexity over residues 1–23 (MPKASASSAKMTASTSNVSSSNS) and 30–45 (ASSPSASPEVSTPSTS). Residues 1–109 (MPKASASSAK…DEKKVATIAD (109 aa)) form a disordered region. The segment covering 100–109 (DEKKVATIAD) has biased composition (basic and acidic residues). Positions 114-142 (VEFSDLGVIPQIVEACTNMGFKHPTPIQV) match the Q motif motif. The region spanning 145 to 316 (IPEALQARDV…RASLKNPVRV (172 aa)) is the Helicase ATP-binding domain. 158–165 (AQTGSGKT) contributes to the ATP binding site. The short motif at 264–267 (DEAD) is the DEAD box element. A Helicase C-terminal domain is found at 339-487 (HKDTYLVHLA…EFPGGNDKEA (149 aa)). The interval 506-561 (LKDKGVGSAGGSGKRKRKMDGKYGDDMDRDDDQVQAGLPVSGNGRHQNQNRKKGRR) is disordered.

It belongs to the DEAD box helicase family. DDX47/RRP3 subfamily. Interacts with the SSU processome.

It is found in the nucleus. The enzyme catalyses ATP + H2O = ADP + phosphate + H(+). Functionally, ATP-dependent rRNA helicase required for pre-ribosomal RNA processing. Involved in the maturation of the 35S-pre-rRNA and to its cleavage to mature 18S rRNA. The polypeptide is ATP-dependent rRNA helicase RRP3 (Mycosarcoma maydis (Corn smut fungus)).